The chain runs to 75 residues: UPF0270 protein PputGB1_1339 (75 aa).

Belongs to the UPF0270 family.

This Pseudomonas putida (strain GB-1) protein is UPF0270 protein PputGB1_1339.